A 270-amino-acid chain; its full sequence is Hydroxyethylthiazole kinase (270 aa).

Met-46 is a substrate binding site. Residues Arg-120 and Thr-166 each coordinate ATP. A substrate-binding site is contributed by Gly-193.

This sequence belongs to the Thz kinase family. Mg(2+) serves as cofactor.

It catalyses the reaction 5-(2-hydroxyethyl)-4-methylthiazole + ATP = 4-methyl-5-(2-phosphooxyethyl)-thiazole + ADP + H(+). Its pathway is cofactor biosynthesis; thiamine diphosphate biosynthesis; 4-methyl-5-(2-phosphoethyl)-thiazole from 5-(2-hydroxyethyl)-4-methylthiazole: step 1/1. Its function is as follows. Catalyzes the phosphorylation of the hydroxyl group of 4-methyl-5-beta-hydroxyethylthiazole (THZ). The sequence is that of Hydroxyethylthiazole kinase from Herpetosiphon aurantiacus (strain ATCC 23779 / DSM 785 / 114-95).